The sequence spans 177 residues: Thymidine kinase (177 aa).

Residue 11 to 18 coordinates ATP; the sequence is GPMFSGKS. Glu83 acts as the Proton acceptor in catalysis. Position 113 (Phe113) interacts with substrate. The Zn(2+) site is built by Cys138 and Cys141. 157 to 161 contributes to the substrate binding site; it reads IEIIG. 2 residues coordinate Zn(2+): Cys170 and Cys173.

This sequence belongs to the thymidine kinase family. As to quaternary structure, homotetramer. Two molecules of substrate bind to each enzyme tetramer.

The enzyme catalyses thymidine + ATP = dTMP + ADP + H(+). Phosphorylates thymidine and thymidine analogs, such as azidothymidine (AZT). Part of the salvage pathway for pyrimidine deoxyribonucleotide synthesis. The chain is Thymidine kinase (OPG101) from Vaccinia virus (strain Tian Tan) (VACV).